A 312-amino-acid chain; its full sequence is Malate dehydrogenase (312 aa).

Residues 7 to 13 (GAAGGIG) and D34 contribute to the NAD(+) site. 2 residues coordinate substrate: R81 and R87. NAD(+) is bound by residues N94 and 117–119 (ITN). The substrate site is built by N119 and R153. Residue H177 is the Proton acceptor of the active site. M227 is a binding site for NAD(+).

Belongs to the LDH/MDH superfamily. MDH type 1 family. As to quaternary structure, homodimer.

The catalysed reaction is (S)-malate + NAD(+) = oxaloacetate + NADH + H(+). Its function is as follows. Catalyzes the reversible oxidation of malate to oxaloacetate. This is Malate dehydrogenase from Enterobacter sp. (strain 638).